We begin with the raw amino-acid sequence, 611 residues long: Mitochondrial import receptor subunit TOM70 (611 aa).

An N-acetylalanine modification is found at Ala2. Residues 2–41 lie on the Mitochondrial intermembrane side of the membrane; that stretch reads AASKPIEAAMAAAAAPGSGNGVGGGGGTAGPGSGAGTLPR. The chain crosses the membrane as a helical span at residues 42–62; the sequence is WHVALAIGAPLLLGAGAMYLW. The Cytoplasmic segment spans residues 63–611; that stretch reads SRRRRRREAG…KKYGLKPPTL (549 aa). The interval 69–110 is disordered; it reads REAGGRGDASGLKRNSERKTPEGRASPALGSGHHDGSGDSLE. Arg74 carries the omega-N-methylarginine modification. A phosphoserine mark is found at Ser94, Ser99, Ser105, Ser108, and Ser113. 2 TPR repeats span residues 117 to 150 and 156 to 189; these read AQAA…CPTE and STFY…NPKY. Residue Lys188 is modified to N6-acetyllysine. A Glycyl lysine isopeptide (Lys-Gly) (interchain with G-Cter in SUMO2) cross-link involves residue Lys278. TPR repeat units follow at residues 297–330, 332–365, 370–403, 404–437, 445–478, 479–512, 514–547, and 548–581; these read ENSG…QGKY, AEAL…KEAN, ANAL…DPMN, SDVY…RPKF, CFAL…FPRC, AEGY…EPDN, TTYV…DNKC, and DFAY…AKSE.

It belongs to the Tom70 family. As to quaternary structure, forms part of the preprotein translocase complex of the outer mitochondrial membrane (TOM complex) which consists of at least 7 different proteins (TOMM5, TOMM6, TOMM7, TOMM20, TOMM22, TOMM40 and TOMM70). Interacts with CAPN8. Interacts with TRADD, TRAF6 and STING. Interacts with MAVS. Interacts with HSPA8 and HSP90AA1; both interactions are required for preprotein mitochondrial import. The interaction with HSP90AA1 is direct and mediates the association of TOMM70 with IRF3 and TBK1. Upon mitochondrial depolarization, interacts with PINK1; the interaction is required for PINK1-TOM-TIM23 supercomplex formation which is critical for PINK1 stabilization at the outer mitochondrial membrane, kinase activation and downstream mitophagy. As to expression, expressed in the base region of the oxyntic and pyloric mucosae.

It localises to the mitochondrion outer membrane. Functionally, acts as a receptor of the preprotein translocase complex of the outer mitochondrial membrane (TOM complex). Recognizes and mediates the translocation of mitochondrial preproteins from the cytosol into the mitochondria in a chaperone dependent manner. Mediates TBK1 and IRF3 activation induced by MAVS in response to virus infection and promotes host antiviral responses during virus infection. This is Mitochondrial import receptor subunit TOM70 from Mus musculus (Mouse).